Consider the following 492-residue polypeptide: Signal transduction histidine-protein kinase/phosphatase MprB (492 aa).

The Cytoplasmic portion of the chain corresponds to 1–27 (MAFPPNSWRPTGPLPTSSLSLRWRVMM). A helical transmembrane segment spans residues 28–48 (LAMSMVALVVVLMAVAVYAVV). Over 49 to 165 (SRALYDDLDN…TVQVLRRLGT (117 aa)) the chain is Extracellular. A helical membrane pass occupies residues 166–186 (VLLIVGGIGVAVAAIAGGAVA). Residues 187 to 239 (RAGLRPVGRLTEAAERVARTDDLRPIPVVGSDELARLTEAFNMMLRALAESRE) form the HAMP domain. Residues 187 to 492 (RAGLRPVGRL…DRGGHTVATE (306 aa)) lie on the Cytoplasmic side of the membrane. In terms of domain architecture, Histidine kinase spans 247-467 (DAGHELRTPL…SVHMLLPGQR (221 aa)). H250 carries the phosphohistidine; by autocatalysis modification. The segment at 470–492 (DPGATRSAEGFVDDRGGHTVATE) is disordered.

Requires Mg(2+) as cofactor. Mn(2+) is required as a cofactor. Autophosphorylated.

It localises to the cell membrane. The catalysed reaction is ATP + protein L-histidine = ADP + protein N-phospho-L-histidine.. Member of the two-component regulatory system MprB/MprA which contributes to maintaining a balance among several systems involved in stress resistance and is required for establishment and maintenance of persistent infection in the host. In response to environmental signals MprB acts both as a membrane-associated protein kinase that undergoes autophosphorylation and subsequently transfers the phosphate to MprA, and a protein phosphatase that dephosphorylates phospho-MprA. The protein is Signal transduction histidine-protein kinase/phosphatase MprB (mprB) of Mycolicibacterium smegmatis (strain ATCC 700084 / mc(2)155) (Mycobacterium smegmatis).